A 166-amino-acid chain; its full sequence is ATP synthase subunit b (166 aa).

The chain crosses the membrane as a helical span at residues 10 to 30 (LLFWMVIVFGIVFVILAKYGF).

The protein belongs to the ATPase B chain family. As to quaternary structure, F-type ATPases have 2 components, F(1) - the catalytic core - and F(0) - the membrane proton channel. F(1) has five subunits: alpha(3), beta(3), gamma(1), delta(1), epsilon(1). F(0) has three main subunits: a(1), b(2) and c(10-14). The alpha and beta chains form an alternating ring which encloses part of the gamma chain. F(1) is attached to F(0) by a central stalk formed by the gamma and epsilon chains, while a peripheral stalk is formed by the delta and b chains.

The protein resides in the cell inner membrane. Its function is as follows. F(1)F(0) ATP synthase produces ATP from ADP in the presence of a proton or sodium gradient. F-type ATPases consist of two structural domains, F(1) containing the extramembraneous catalytic core and F(0) containing the membrane proton channel, linked together by a central stalk and a peripheral stalk. During catalysis, ATP synthesis in the catalytic domain of F(1) is coupled via a rotary mechanism of the central stalk subunits to proton translocation. Functionally, component of the F(0) channel, it forms part of the peripheral stalk, linking F(1) to F(0). This Phocaeicola vulgatus (strain ATCC 8482 / DSM 1447 / JCM 5826 / CCUG 4940 / NBRC 14291 / NCTC 11154) (Bacteroides vulgatus) protein is ATP synthase subunit b.